The following is a 276-amino-acid chain: Glutamate racemase (276 aa).

Substrate-binding positions include 10–11 (DS) and 42–43 (YG). Catalysis depends on cysteine 74, which acts as the Proton donor/acceptor. A substrate-binding site is contributed by 75 to 76 (NT). Cysteine 185 (proton donor/acceptor) is an active-site residue. Position 186-187 (186-187 (TH)) interacts with substrate.

Belongs to the aspartate/glutamate racemases family.

It carries out the reaction L-glutamate = D-glutamate. Its pathway is cell wall biogenesis; peptidoglycan biosynthesis. Provides the (R)-glutamate required for cell wall biosynthesis. In Levilactobacillus brevis (Lactobacillus brevis), this protein is Glutamate racemase.